We begin with the raw amino-acid sequence, 586 residues long: Protein BONZAI 2 (586 aa).

Residue glycine 2 is the site of N-myristoyl glycine attachment. 2 consecutive C2 domains span residues 25–164 and 176–303; these read SAAT…ALEL and PQHN…NLAL. Residues aspartate 62, aspartate 68, aspartate 121, and aspartate 123 each contribute to the Ca(2+) site. A VWFA domain is found at 344 to 563; the sequence is NFMVAIDFTA…SVVEALLAEL (220 aa).

This sequence belongs to the copine family. Interacts with BAP1 and BAP2. Ca(2+) serves as cofactor. Expressed in roots, leaves and stems. Expressed in young growing tissues.

The protein resides in the cell membrane. In terms of biological role, negative regulator of cell death and defense responses. May repress a number of R genes and may have effects in promoting growth and development. May function in membrane trafficking and in fusion of vesicles with plasma membrane. This is Protein BONZAI 2 (BON2) from Arabidopsis thaliana (Mouse-ear cress).